Here is a 288-residue protein sequence, read N- to C-terminus: MDKIIKSISKNGHFRAFALDSTLTVKEAQERHQTWPTSTVALGRTLIAGQILGANEKGDTKITVKVLGDGAMGPIIAVADSRGHVKGYVKNRKLDYKKASTGEVLVAPFVGNGFLVVVKDMGLKQPYSGQVDLITGEIGEDLAWYFLSSEQTPSSVGVNVLLNEDSDTVKIAGGFMLQALPDATDEEITEIEHNIKSMPSIATMLTSEEPLKTMLDNIYGDMEYKNLGEFPLEFKCDCSKERFLEGIKSLGREPIEEMIAEDHGAEIICQFCENKYEYSEDELKALLK.

Intrachain disulfides connect cysteine 236–cysteine 238 and cysteine 269–cysteine 272.

The protein belongs to the HSP33 family. Under oxidizing conditions two disulfide bonds are formed involving the reactive cysteines. Under reducing conditions zinc is bound to the reactive cysteines and the protein is inactive.

The protein resides in the cytoplasm. Functionally, redox regulated molecular chaperone. Protects both thermally unfolding and oxidatively damaged proteins from irreversible aggregation. Plays an important role in the bacterial defense system toward oxidative stress. The chain is 33 kDa chaperonin from Lactococcus lactis subsp. lactis (strain IL1403) (Streptococcus lactis).